A 480-amino-acid chain; its full sequence is Probable cyclodipeptide synthase PUL1 (480 aa).

The protein operates within siderophore biosynthesis. Probable cyclodipeptide synthase; part of the PUL gene cluster that mediates the formation of pulcherrimin, a red iron-containing pigment composed of two cyclized and modified leucine molecules that acts as a siderophore, a chelator that binds iron outside the cell for subsequent uptake. Two leucine molecules are cyclized via a cyclodipeptide synthase, and the resulting diketopiperazine is oxidized by a cytochrome P450 monooxygenase to generate pulcherriminic acid (PA), which can then spontaneously bind iron to form pulcherrimin. The probable cyclodipeptide synthase PUL1 and the cytochrome P450 monooxygenase PUL2 encode the enzymes responsible for the two-step pulcherrimin biosynthesis pathway. This chain is Probable cyclodipeptide synthase PUL1, found in Kluyveromyces lactis (strain ATCC 8585 / CBS 2359 / DSM 70799 / NBRC 1267 / NRRL Y-1140 / WM37) (Yeast).